Here is a 23-residue protein sequence, read N- to C-terminus: Hemocyanin subunit 4 (23 aa).

It belongs to the tyrosinase family. Hemocyanin subfamily. In terms of tissue distribution, hemolymph.

The protein localises to the secreted. Its subcellular location is the extracellular space. Hemocyanins are copper-containing oxygen carriers occurring freely dissolved in the hemolymph of many mollusks and arthropods. The protein is Hemocyanin subunit 4 of Carcinus maenas (Common shore crab).